A 64-amino-acid polypeptide reads, in one-letter code: Prokaryotic ubiquitin-like protein Pup (64 aa).

Positions 1-11 (MAQEQTKRTGG) are enriched in basic and acidic residues. Positions 1–38 (MAQEQTKRTGGGDEDDTPGGDGAAGQERREKLAEDTDD) are disordered. The interval 21 to 58 (DGAAGQERREKLAEDTDDLLDEIDDVLEENAEDFVRAY) is ARC ATPase binding. A coiled-coil region spans residues 24–52 (AGQERREKLAEDTDDLLDEIDDVLEENAE). At glutamine 64 the chain carries Deamidated glutamine. Glutamine 64 is covalently cross-linked (Isoglutamyl lysine isopeptide (Gln-Lys) (interchain with K-? in acceptor proteins)).

This sequence belongs to the prokaryotic ubiquitin-like protein family. Strongly interacts with the proteasome-associated ATPase ARC through a hydrophobic interface; the interacting region of Pup lies in its C-terminal half. There is one Pup binding site per ARC hexamer ring. Is modified by deamidation of its C-terminal glutamine to glutamate by the deamidase Dop, a prerequisite to the subsequent pupylation process.

Its pathway is protein degradation; proteasomal Pup-dependent pathway. Protein modifier that is covalently attached to lysine residues of substrate proteins, thereby targeting them for proteasomal degradation. The tagging system is termed pupylation. The chain is Prokaryotic ubiquitin-like protein Pup from Rhodococcus opacus (strain B4).